The chain runs to 61 residues: Small ribosomal subunit protein uS14 (61 aa).

C24, C27, C40, and C43 together coordinate Zn(2+).

This sequence belongs to the universal ribosomal protein uS14 family. Zinc-binding uS14 subfamily. Part of the 30S ribosomal subunit. Contacts proteins S3 and S10. It depends on Zn(2+) as a cofactor.

Its function is as follows. Binds 16S rRNA, required for the assembly of 30S particles and may also be responsible for determining the conformation of the 16S rRNA at the A site. This Mesomycoplasma hyopneumoniae (strain 232) (Mycoplasma hyopneumoniae) protein is Small ribosomal subunit protein uS14.